We begin with the raw amino-acid sequence, 46 residues long: Daisho2 (46 aa).

The signal sequence occupies residues 1–22 (MNCLKICGFFFALIAALATAEA).

Hemolymph (at protein level).

It localises to the secreted. Peptide which plays a role in the humoral immune response to a subset of filamentous fungi, including F.oxysporum and F.verticillioides. The sequence is that of Daisho2 from Drosophila melanogaster (Fruit fly).